Reading from the N-terminus, the 323-residue chain is Fructose-1,6-bisphosphatase class 1 (323 aa).

Positions 90, 111, 113, and 114 each coordinate Mg(2+). Substrate-binding positions include 114–117, Tyr222, and Lys253; that span reads DGSS. Mg(2+) is bound at residue Glu259.

It belongs to the FBPase class 1 family. As to quaternary structure, homotetramer. The cofactor is Mg(2+).

The protein resides in the cytoplasm. It catalyses the reaction beta-D-fructose 1,6-bisphosphate + H2O = beta-D-fructose 6-phosphate + phosphate. The protein operates within carbohydrate biosynthesis; gluconeogenesis. The sequence is that of Fructose-1,6-bisphosphatase class 1 from Pelobacter propionicus (strain DSM 2379 / NBRC 103807 / OttBd1).